The primary structure comprises 379 residues: Spermatogenesis-associated protein 17 (379 aa).

3 IQ domains span residues E48–I77, L71–Y100, and Y107–Y136.

Strongly expressed in adult testis but weakly expressed in the spleen and thymus. Strongly expressed in round and elongating spermatids, and weakly or not expressed in spermatozoa.

The protein resides in the cytoplasm. The sequence is that of Spermatogenesis-associated protein 17 (Spata17) from Mus musculus (Mouse).